An 887-amino-acid chain; its full sequence is Valine--tRNA ligase (887 aa).

The 'HIGH' region motif lies at 47 to 57 (PNVTGALHMGH). The 'KMSKS' region motif lies at 527 to 531 (KMSKS). Lys-530 contacts ATP. Residues 817 to 885 (LVNVEEEEKR…LLASLEKIRK (69 aa)) adopt a coiled-coil conformation.

This sequence belongs to the class-I aminoacyl-tRNA synthetase family. ValS type 1 subfamily. In terms of assembly, monomer.

It is found in the cytoplasm. It carries out the reaction tRNA(Val) + L-valine + ATP = L-valyl-tRNA(Val) + AMP + diphosphate. Its function is as follows. Catalyzes the attachment of valine to tRNA(Val). As ValRS can inadvertently accommodate and process structurally similar amino acids such as threonine, to avoid such errors, it has a 'posttransfer' editing activity that hydrolyzes mischarged Thr-tRNA(Val) in a tRNA-dependent manner. The chain is Valine--tRNA ligase from Geobacter sulfurreducens (strain ATCC 51573 / DSM 12127 / PCA).